A 575-amino-acid polypeptide reads, in one-letter code: Transcription factor collier (575 aa).

Residues 79-82 are interaction with DNA; the sequence is RKSN. Residues 167–186 form a C5-type zinc finger; it reads CRVLLTHEVMCSRCCDKKSC. Interaction with DNA stretches follow at residues 213-220 and 252-255; these read NCLKNAGN and NNSK. The tract at residues 255–278 is disordered; that stretch reads KHGRRAKRLDTTEGTGNTSLSISG. Residues 266 to 276 are compositionally biased toward polar residues; sequence TEGTGNTSLSI. An IPT/TIG domain is found at 299–382; it reads PCIKAISPSE…KGSPGRFVYV (84 aa). 2 disordered regions span residues 456 to 492 and 546 to 575; these read GQWT…GSYG and AATA…AAAV. Over residues 479–492 the composition is skewed to low complexity; that stretch reads SSASTPHSSGGSYG. Positions 546–557 are enriched in basic residues; it reads AATAHPHHHYPH. The segment covering 561–575 has biased composition (low complexity); sequence PWHNPAVSAATAAAV.

Belongs to the COE family. As to expression, its expression at the blastoderm stage is restricted to a single stripe of cells corresponding to part of the intercalary and mandibular segment primordia, possibly parasegment O.

Its subcellular location is the nucleus. In terms of biological role, may act as a 'second-level regulator' of head patterning. Required for establishment of the PS(-1)/PS0 parasegmental border and formation of the intercalary segment. Required for expression of the segment polarity genes hedgehog, engrailed and wingless, and the segment-identity genes CAP and collar in the intercalary segment. Required at the onset of the gastrulation for the correct formation of the mandibular segment. In Drosophila melanogaster (Fruit fly), this protein is Transcription factor collier (kn).